A 78-amino-acid chain; its full sequence is Acyl carrier protein (78 aa).

The region spanning 2-77 (SSIEERVKKI…QATSYVEANL (76 aa)) is the Carrier domain. The residue at position 37 (serine 37) is an O-(pantetheine 4'-phosphoryl)serine.

This sequence belongs to the acyl carrier protein (ACP) family. 4'-phosphopantetheine is transferred from CoA to a specific serine of apo-ACP by AcpS. This modification is essential for activity because fatty acids are bound in thioester linkage to the sulfhydryl of the prosthetic group.

Its subcellular location is the cytoplasm. It participates in lipid metabolism; fatty acid biosynthesis. Carrier of the growing fatty acid chain in fatty acid biosynthesis. The sequence is that of Acyl carrier protein from Hydrogenovibrio crunogenus (strain DSM 25203 / XCL-2) (Thiomicrospira crunogena).